A 261-amino-acid chain; its full sequence is Acetylglutamate kinase (261 aa).

Substrate contacts are provided by residues 41-42 (GG), Arg63, and Asn157.

Belongs to the acetylglutamate kinase family. ArgB subfamily.

It is found in the cytoplasm. The enzyme catalyses N-acetyl-L-glutamate + ATP = N-acetyl-L-glutamyl 5-phosphate + ADP. Its pathway is amino-acid biosynthesis; L-arginine biosynthesis; N(2)-acetyl-L-ornithine from L-glutamate: step 2/4. Catalyzes the ATP-dependent phosphorylation of N-acetyl-L-glutamate. This Koribacter versatilis (strain Ellin345) protein is Acetylglutamate kinase.